We begin with the raw amino-acid sequence, 108 residues long: ATP-dependent Clp protease adapter protein ClpS (108 aa).

A compositionally biased stretch (basic and acidic residues) spans 1–10 (MADSDKHGDE). The disordered stretch occupies residues 1–21 (MADSDKHGDEGPSTGVVVKAK).

This sequence belongs to the ClpS family. In terms of assembly, binds to the N-terminal domain of the chaperone ClpA.

Its function is as follows. Involved in the modulation of the specificity of the ClpAP-mediated ATP-dependent protein degradation. This chain is ATP-dependent Clp protease adapter protein ClpS, found in Rhodospirillum centenum (strain ATCC 51521 / SW).